We begin with the raw amino-acid sequence, 243 residues long: 2,3-bisphosphoglycerate-dependent phosphoglycerate mutase (243 aa).

Residues 8–15 (RHGQSEWN), 21–22 (TG), Arg-60, 87–90 (ERHY), Lys-98, 114–115 (RR), and 183–184 (GN) each bind substrate. His-9 acts as the Tele-phosphohistidine intermediate in catalysis. The active-site Proton donor/acceptor is Glu-87.

Belongs to the phosphoglycerate mutase family. BPG-dependent PGAM subfamily. As to quaternary structure, homodimer.

It catalyses the reaction (2R)-2-phosphoglycerate = (2R)-3-phosphoglycerate. It functions in the pathway carbohydrate degradation; glycolysis; pyruvate from D-glyceraldehyde 3-phosphate: step 3/5. In terms of biological role, catalyzes the interconversion of 2-phosphoglycerate and 3-phosphoglycerate. The chain is 2,3-bisphosphoglycerate-dependent phosphoglycerate mutase from Maricaulis maris (strain MCS10) (Caulobacter maris).